Reading from the N-terminus, the 267-residue chain is 2-keto-3-deoxy-L-rhamnonate aldolase (267 aa).

H49 acts as the Proton acceptor in catalysis. Residue Q151 participates in substrate binding. E153 serves as a coordination point for Mg(2+). Positions 178 and 179 each coordinate substrate. Mg(2+) is bound at residue D179.

The protein belongs to the HpcH/HpaI aldolase family. KDR aldolase subfamily. Homohexamer. Requires Mg(2+) as cofactor.

The enzyme catalyses 2-dehydro-3-deoxy-L-rhamnonate = (S)-lactaldehyde + pyruvate. Catalyzes the reversible retro-aldol cleavage of 2-keto-3-deoxy-L-rhamnonate (KDR) to pyruvate and lactaldehyde. In Salmonella typhi, this protein is 2-keto-3-deoxy-L-rhamnonate aldolase.